The primary structure comprises 904 residues: Protein translocase subunit SecA (904 aa).

Residues glutamine 87, 105-109 (GEGKT), and aspartate 512 each bind ATP. Positions 851–870 (LARQQQLSHQTDNSALMSEE) are disordered. Residues cysteine 888, cysteine 890, cysteine 899, and histidine 900 each contribute to the Zn(2+) site.

The protein belongs to the SecA family. As to quaternary structure, monomer and homodimer. Part of the essential Sec protein translocation apparatus which comprises SecA, SecYEG and auxiliary proteins SecDF-YajC and YidC. It depends on Zn(2+) as a cofactor.

The protein resides in the cell inner membrane. It localises to the cytoplasm. It carries out the reaction ATP + H2O + cellular proteinSide 1 = ADP + phosphate + cellular proteinSide 2.. Part of the Sec protein translocase complex. Interacts with the SecYEG preprotein conducting channel. Has a central role in coupling the hydrolysis of ATP to the transfer of proteins into and across the cell membrane, serving both as a receptor for the preprotein-SecB complex and as an ATP-driven molecular motor driving the stepwise translocation of polypeptide chains across the membrane. The protein is Protein translocase subunit SecA of Yersinia pseudotuberculosis serotype O:1b (strain IP 31758).